We begin with the raw amino-acid sequence, 71 residues long: Small ribosomal subunit protein bS21 (71 aa).

A compositionally biased stretch (basic and acidic residues) spans 34–44; sequence RREHYEKPTSE. Residues 34–71 form a disordered region; the sequence is RREHYEKPTSERKRKKAAAVKRHAKKLSRDNARRTRLY. The segment covering 45–59 has biased composition (basic residues); sequence RKRKKAAAVKRHAKK. Positions 60–71 are enriched in basic and acidic residues; it reads LSRDNARRTRLY.

Belongs to the bacterial ribosomal protein bS21 family.

In Idiomarina loihiensis (strain ATCC BAA-735 / DSM 15497 / L2-TR), this protein is Small ribosomal subunit protein bS21.